Consider the following 209-residue polypeptide: Ribosomal RNA large subunit methyltransferase E (209 aa).

Residues Gly63, Trp65, Asp83, Asp99, and Asp124 each contribute to the S-adenosyl-L-methionine site. The Proton acceptor role is filled by Lys164. In terms of domain architecture, TRAM spans 191–209; that stretch reads EASRGRSREVYIVATGYKG.

Belongs to the class I-like SAM-binding methyltransferase superfamily. RNA methyltransferase RlmE family.

It is found in the cytoplasm. The enzyme catalyses uridine(2552) in 23S rRNA + S-adenosyl-L-methionine = 2'-O-methyluridine(2552) in 23S rRNA + S-adenosyl-L-homocysteine + H(+). In terms of biological role, specifically methylates the uridine in position 2552 of 23S rRNA at the 2'-O position of the ribose in the fully assembled 50S ribosomal subunit. The sequence is that of Ribosomal RNA large subunit methyltransferase E from Haemophilus influenzae (strain 86-028NP).